Reading from the N-terminus, the 395-residue chain is 8-amino-7-oxononanoate synthase (395 aa).

Arginine 24 is a binding site for substrate. 111–112 (GF) provides a ligand contact to pyridoxal 5'-phosphate. A substrate-binding site is contributed by histidine 136. Residues serine 184, 209-212 (DDAH), and 240-243 (TLSK) contribute to the pyridoxal 5'-phosphate site. Lysine 243 bears the N6-(pyridoxal phosphate)lysine mark. Position 357 (threonine 357) interacts with substrate.

It belongs to the class-II pyridoxal-phosphate-dependent aminotransferase family. BioF subfamily. In terms of assembly, homodimer. Pyridoxal 5'-phosphate serves as cofactor.

It carries out the reaction 6-carboxyhexanoyl-[ACP] + L-alanine + H(+) = (8S)-8-amino-7-oxononanoate + holo-[ACP] + CO2. Its pathway is cofactor biosynthesis; biotin biosynthesis. Catalyzes the decarboxylative condensation of pimeloyl-[acyl-carrier protein] and L-alanine to produce 8-amino-7-oxononanoate (AON), [acyl-carrier protein], and carbon dioxide. This Thermoanaerobacter pseudethanolicus (strain ATCC 33223 / 39E) (Clostridium thermohydrosulfuricum) protein is 8-amino-7-oxononanoate synthase.